The chain runs to 262 residues: Trypsin theta (262 aa).

Positions 1-19 are cleaved as a signal peptide; it reads MHRLVVLLVCLAVGSACAG. A propeptide spans 20–34 (activation peptide); the sequence is TVGVSNGDPFEREGR. The 226-residue stretch at 35 to 260 folds into the Peptidase S1 domain; the sequence is IVGGEDTTIG…LRKWILNASE (226 aa). The cysteines at positions 61 and 77 are disulfide-linked. Active-site charge relay system residues include H76 and D121. 2 disulfides stabilise this stretch: C186/C203 and C212/C236. Residue S216 is the Charge relay system of the active site.

Belongs to the peptidase S1 family.

It is found in the secreted. The protein resides in the extracellular space. It catalyses the reaction Preferential cleavage: Arg-|-Xaa, Lys-|-Xaa.. The protein is Trypsin theta (thetaTry) of Drosophila melanogaster (Fruit fly).